Reading from the N-terminus, the 370-residue chain is Cap-specific mRNA (nucleoside-2'-O-)-methyltransferase 1 (370 aa).

Residues 87–294 enclose the RrmJ-type SAM-dependent 2'-O-MTase domain; that stretch reads AFRNRAGHKL…ERYLVCIGFI (208 aa). Positions 130 and 207 each coordinate S-adenosyl-L-methionine. The active-site Proton acceptor is lysine 248.

As to quaternary structure, component of a complex composed of CBF5, GAR1, NHP2, MTR1, NOP10 and Tb11.01.8210.

It localises to the nucleus. The catalysed reaction is a 5'-end (N(7)-methyl 5'-triphosphoguanosine)-ribonucleoside in mRNA + S-adenosyl-L-methionine = a 5'-end (N(7)-methyl 5'-triphosphoguanosine)-(2'-O-methyl-ribonucleoside) in mRNA + S-adenosyl-L-homocysteine + H(+). S-adenosyl-L-methionine-dependent methyltransferase that mediates RNA cap1 2'-O-ribose methylation to the 5'-cap structure of spliced leader and U1 small nuclear RNAs. Methylates the ribose of the first nucleotide of a m(7)GpppG-capped RNA to produce m(7)GpppNmp (cap1). Cap1 modification is linked to higher levels of translation. Recognizes a guanosine cap on RNA independent of its N(7) methylation status. The polypeptide is Cap-specific mRNA (nucleoside-2'-O-)-methyltransferase 1 (MTR1) (Trypanosoma brucei brucei (strain 927/4 GUTat10.1)).